The following is a 330-amino-acid chain: Glycerol-3-phosphate dehydrogenase [NAD(P)+] (330 aa).

NADPH-binding residues include W11, R33, and K105. K105, G133, and S135 together coordinate sn-glycerol 3-phosphate. A137 lines the NADPH pocket. Sn-glycerol 3-phosphate is bound by residues K188, D241, S251, R252, and N253. K188 (proton acceptor) is an active-site residue. Residue R252 coordinates NADPH. 2 residues coordinate NADPH: V276 and E278.

This sequence belongs to the NAD-dependent glycerol-3-phosphate dehydrogenase family.

Its subcellular location is the cytoplasm. It carries out the reaction sn-glycerol 3-phosphate + NAD(+) = dihydroxyacetone phosphate + NADH + H(+). The catalysed reaction is sn-glycerol 3-phosphate + NADP(+) = dihydroxyacetone phosphate + NADPH + H(+). The protein operates within membrane lipid metabolism; glycerophospholipid metabolism. In terms of biological role, catalyzes the reduction of the glycolytic intermediate dihydroxyacetone phosphate (DHAP) to sn-glycerol 3-phosphate (G3P), the key precursor for phospholipid synthesis. The sequence is that of Glycerol-3-phosphate dehydrogenase [NAD(P)+] from Acidovorax sp. (strain JS42).